An 89-amino-acid polypeptide reads, in one-letter code: Small ribosomal subunit protein uS15 (89 aa).

Belongs to the universal ribosomal protein uS15 family. Part of the 30S ribosomal subunit. Forms a bridge to the 50S subunit in the 70S ribosome, contacting the 23S rRNA.

One of the primary rRNA binding proteins, it binds directly to 16S rRNA where it helps nucleate assembly of the platform of the 30S subunit by binding and bridging several RNA helices of the 16S rRNA. Its function is as follows. Forms an intersubunit bridge (bridge B4) with the 23S rRNA of the 50S subunit in the ribosome. The sequence is that of Small ribosomal subunit protein uS15 from Orientia tsutsugamushi (strain Boryong) (Rickettsia tsutsugamushi).